Consider the following 701-residue polypeptide: MNGAAGGDTQGKMTAPKDQDQWSQEDMLTLLQTMKTLLPGQDNSKFKTTESHLDWNKLAFKHYSGSMCRQKWMEISNEVRKFRTLTELILDADEHVRHPYKGKKLKKHPEFPKKPLTPYFRFFMEKRAKYAKLHPEMSNLDLTKILSKKYKELPEKKKMKYIQDFQREKQDFERNMAKFREEHPDLMQNPKKSDVPEKPKTPQQLWYNHERKVYLKLHADASTKDIKDALGKQWSQLPDKKRLKWIHKALEQRKQYEGVMREYMQKHPELNITEEGITRSTLTKAERQLKDKFDGRPTKPPPNSYSMYCAELMANMKDVPSTERMVLCSQRWKLLSQKEKDAYHKKCEQRKKDYEVELMRFLENLPEEEQQRVLAEEKMVGMKRKRTNTPASKMATEDAAKVKSRSGQADKKKAAEERAKLPETPKTAEEIWQQSVIGDYLARFKNDRAKALKVMEATWLNMEKKEKIMWIKKAAEDQKRYERELSDMRSTPAPTTAGKKVKFLGEPKKAPMNGYQKFSQELLSNGELNHLPLKERMVEIGSRWHRISPTQKDYYKKLAEDQQRLYRTQFDTWMKGLSTQDRAAYKEQNTNKRKSTTKIQAPSSKSKLVIQSKSDDDEDDEDDEDEEDDDDDDDEDKEDSSEDGDSSDSSSDEDSEEGEENEDEEDEEDDDEDNEEDDDDNESGSSSSSSSSADSSDSDSN.

The disordered stretch occupies residues 1 to 21 (MNGAAGGDTQGKMTAPKDQDQ). DNA-binding regions (HMG box) lie at residues 112 to 180 (PKKP…AKFR), 196 to 264 (PEKP…REYM), 298 to 362 (TKPP…MRFL), 422 to 489 (PETP…SDMR), and 508 to 574 (KKAP…DTWM). Positions 382–426 (MKRKRTNTPASKMATEDAAKVKSRSGQADKKKAAEERAKLPETPK) are disordered. Over residues 408-426 (QADKKKAAEERAKLPETPK) the composition is skewed to basic and acidic residues. Residues 584–701 (AYKEQNTNKR…SADSSDSDSN (118 aa)) are disordered. Residues 597-612 (TKIQAPSSKSKLVIQS) are compositionally biased toward polar residues. Positions 615–682 (DDDEDDEDDE…DNEEDDDDNE (68 aa)) are enriched in acidic residues. A compositionally biased stretch (low complexity) spans 683-695 (SGSSSSSSSSADS).

XUBF consists of 2 polypeptides of 82 and 85 kDa, encoded by the same or closely related genes.

Its subcellular location is the nucleus. In terms of biological role, UBF recognizes the ribosomal RNA gene promotor and activates transcription mediated by RNA polymerase I through cooperative interactions with the species-specific factor SL1. It binds specifically to the upstream control element. This Xenopus laevis (African clawed frog) protein is Nucleolar transcription factor 1-B (ubtf-b).